A 743-amino-acid polypeptide reads, in one-letter code: Putative metallophosphoesterase At3g03305 (743 aa).

A signal peptide spans 1–40 (MESIGDDDELRSKTVSLPRRISFTILLLLLLISLSTRVSG). Residues aspartate 66, histidine 68, and aspartate 101 each coordinate a divalent metal cation. Transmembrane regions (helical) follow at residues 514–534 (ILWP…CIII), 565–585 (MPVV…FPWF), 623–643 (VMVV…LVVC), 687–704 (LFRK…WKHF), and 716–736 (MNVV…LYVI).

This sequence belongs to the metallophosphoesterase superfamily. The cofactor is a divalent metal cation.

The protein resides in the membrane. This chain is Putative metallophosphoesterase At3g03305, found in Arabidopsis thaliana (Mouse-ear cress).